Reading from the N-terminus, the 610-residue chain is Peptidyl-prolyl cis-trans isomerase 9 (610 aa).

Ser-13 carries the post-translational modification Phosphoserine. 3 WD repeats span residues 45–83 (MHNA…VEYI), 88–127 (AHNA…LVNI), and 177–216 (KHTA…QKPD). In terms of domain architecture, PPIase cyclophilin-type spans 453–607 (LGKAAIIHTT…EPTKIINISI (155 aa)).

This sequence belongs to the cyclophilin-type PPIase family.

The protein resides in the nucleus. It catalyses the reaction [protein]-peptidylproline (omega=180) = [protein]-peptidylproline (omega=0). Its function is as follows. PPIases accelerate the folding of proteins. It catalyzes the cis-trans isomerization of proline imidic peptide bonds in oligopeptides. This is Peptidyl-prolyl cis-trans isomerase 9 (cyp9) from Schizosaccharomyces pombe (strain 972 / ATCC 24843) (Fission yeast).